The following is a 191-amino-acid chain: Cell division protein SepF (191 aa).

The segment covering 156–167 has biased composition (polar residues); that stretch reads EEASPSNMSNKG. The interval 156-191 is disordered; that stretch reads EEASPSNMSNKGNDLISKETSPAPEPAWGETVATAL.

It belongs to the SepF family. In terms of assembly, homodimer. Interacts with FtsZ.

Its subcellular location is the cytoplasm. Functionally, cell division protein that is part of the divisome complex and is recruited early to the Z-ring. Probably stimulates Z-ring formation, perhaps through the cross-linking of FtsZ protofilaments. Its function overlaps with FtsA. This is Cell division protein SepF from Prochlorococcus marinus (strain NATL2A).